We begin with the raw amino-acid sequence, 564 residues long: Formate--tetrahydrofolate ligase (564 aa).

65 to 72 is a binding site for ATP; that stretch reads TPLGEGKT.

The protein belongs to the formate--tetrahydrofolate ligase family.

It catalyses the reaction (6S)-5,6,7,8-tetrahydrofolate + formate + ATP = (6R)-10-formyltetrahydrofolate + ADP + phosphate. Its pathway is one-carbon metabolism; tetrahydrofolate interconversion. The protein is Formate--tetrahydrofolate ligase of Roseiflexus sp. (strain RS-1).